We begin with the raw amino-acid sequence, 315 residues long: Probable cell division protein WhiA (315 aa).

Positions 275–309 form a DNA-binding region, H-T-H motif; it reads TLKELGEMVSSGTVSKSGVNHRLRKIDEIADALRR.

Belongs to the WhiA family.

Functionally, involved in cell division and chromosome segregation. The chain is Probable cell division protein WhiA from Lysinibacillus sphaericus (strain C3-41).